The following is a 329-amino-acid chain: Peroxidase 30 (329 aa).

The signal sequence occupies residues 1-27; it reads MKTMTQLNIAVVVVVTVLIGMLRSSEA. 4 disulfide bridges follow: C38/C116, C71/C76, C122/C324, and C201/C234. Catalysis depends on H69, which acts as the Proton acceptor. Ca(2+) is bound by residues D70, V73, G75, D77, and S79. 2 N-linked (GlcNAc...) asparagine glycosylation sites follow: N83 and N155. The tract at residues 141 to 165 is disordered; the sequence is SWSVPTGRRDGRISNKTEATNNIPP. Polar residues predominate over residues 156 to 165; the sequence is KTEATNNIPP. P164 is a binding site for substrate. A glycan (N-linked (GlcNAc...) asparagine) is linked at N169. H194 contributes to the heme b binding site. A Ca(2+)-binding site is contributed by T195. N-linked (GlcNAc...) asparagine glycosylation is found at N210 and N240. Residues D247, S250, and D255 each contribute to the Ca(2+) site. A glycan (N-linked (GlcNAc...) asparagine) is linked at N290.

Belongs to the peroxidase family. Classical plant (class III) peroxidase subfamily. It depends on heme b as a cofactor. Ca(2+) serves as cofactor. In terms of tissue distribution, mainly expressed in roots.

It is found in the secreted. It catalyses the reaction 2 a phenolic donor + H2O2 = 2 a phenolic radical donor + 2 H2O. Functionally, removal of H(2)O(2), oxidation of toxic reductants, biosynthesis and degradation of lignin, suberization, auxin catabolism, response to environmental stresses such as wounding, pathogen attack and oxidative stress. These functions might be dependent on each isozyme/isoform in each plant tissue. The polypeptide is Peroxidase 30 (PER30) (Arabidopsis thaliana (Mouse-ear cress)).